We begin with the raw amino-acid sequence, 248 residues long: Trypsin I-P38 (248 aa).

An N-terminal signal peptide occupies residues 1–15 (MKFLVLVAFLGVAVA). Positions 16 to 25 (FPISDEDDDK) are cleaved as a propeptide — activation peptide. A Peptidase S1 domain is found at 26-246 (IVGGYSCARS…YVSWIKTTMS (221 aa)). 6 disulfide bridges follow: cysteine 32–cysteine 162, cysteine 50–cysteine 66, cysteine 134–cysteine 235, cysteine 141–cysteine 208, cysteine 173–cysteine 187, and cysteine 198–cysteine 222. Residue histidine 65 is the Charge relay system of the active site. Ca(2+) contacts are provided by glutamate 77, asparagine 79, and glutamate 87. The active-site Charge relay system is aspartate 109. The active-site Charge relay system is the serine 202.

This sequence belongs to the peptidase S1 family. Ca(2+) serves as cofactor. In terms of tissue distribution, high levels are seen in the pancreas while lower levels are found in the liver, spleen and thymus.

Its subcellular location is the secreted. The protein localises to the extracellular space. It carries out the reaction Preferential cleavage: Arg-|-Xaa, Lys-|-Xaa.. The chain is Trypsin I-P38 from Gallus gallus (Chicken).